The primary structure comprises 369 residues: Peptide chain release factor 2 (369 aa).

Gln249 carries the N5-methylglutamine modification.

Belongs to the prokaryotic/mitochondrial release factor family. Post-translationally, methylated by PrmC. Methylation increases the termination efficiency of RF2.

It localises to the cytoplasm. Functionally, peptide chain release factor 2 directs the termination of translation in response to the peptide chain termination codons UGA and UAA. This is Peptide chain release factor 2 from Corynebacterium diphtheriae (strain ATCC 700971 / NCTC 13129 / Biotype gravis).